The following is a 426-amino-acid chain: Lipid droplet localized protein (426 aa).

Residues Phe-278 to Phe-298 form a helical membrane-spanning segment.

Belongs to the saccharopine dehydrogenase family.

It is found in the membrane. The protein localises to the lipid droplet. The polypeptide is Lipid droplet localized protein (Caenorhabditis elegans).